The following is a 971-amino-acid chain: Exportin-2 (971 aa).

N-acetylmethionine is present on Met1. The Importin N-terminal domain occupies 29–102 (AEKFLESVEG…KANIVHLMLS (74 aa)). Residue Ser112 is modified to Phosphoserine. Lys574 and Lys824 each carry N6-acetyllysine. Ser931 is modified (phosphoserine).

The protein belongs to the XPO2/CSE1 family. As to quaternary structure, found in a complex with CSE1L/XPO2, Ran and KPNA2. Binds with high affinity to importin-alpha only in the presence of RanGTP. The complex is dissociated by the combined action of RanBP1 and RanGAP1. Interacts with CFTR.

Its subcellular location is the cytoplasm. It is found in the nucleus. In terms of biological role, export receptor for importin-alpha. Mediates importin-alpha re-export from the nucleus to the cytoplasm after import substrates (cargos) have been released into the nucleoplasm. In the nucleus binds cooperatively to importin-alpha and to the GTPase Ran in its active GTP-bound form. Docking of this trimeric complex to the nuclear pore complex (NPC) is mediated through binding to nucleoporins. Upon transit of a nuclear export complex into the cytoplasm, disassembling of the complex and hydrolysis of Ran-GTP to Ran-GDP (induced by RANBP1 and RANGAP1, respectively) cause release of the importin-alpha from the export receptor. CSE1L/XPO2 then return to the nuclear compartment and mediate another round of transport. The directionality of nuclear export is thought to be conferred by an asymmetric distribution of the GTP- and GDP-bound forms of Ran between the cytoplasm and nucleus. The polypeptide is Exportin-2 (CSE1L) (Bos taurus (Bovine)).